The following is a 50-amino-acid chain: Large ribosomal subunit protein bL32A (50 aa).

A compositionally biased stretch (basic residues) spans 1 to 19; the sequence is MAVPKRRKSRSNTRHRRSQ. Positions 1–21 are disordered; it reads MAVPKRRKSRSNTRHRRSQWK.

The protein belongs to the bacterial ribosomal protein bL32 family.

This chain is Large ribosomal subunit protein bL32A, found in Saccharopolyspora erythraea (strain ATCC 11635 / DSM 40517 / JCM 4748 / NBRC 13426 / NCIMB 8594 / NRRL 2338).